A 176-amino-acid chain; its full sequence is Late embryogenesis abundant protein 49 (176 aa).

2 consecutive SMP domains span residues 49–106 (TTLT…RNQK) and 115–171 (NLGD…KLNH).

This sequence belongs to the LEA type SMP family.

The protein localises to the cytoplasm. Its subcellular location is the nucleus. Its function is as follows. LEA proteins are late embryonic proteins abundant in higher plant seed embryos. The function of those proteins is not known. The chain is Late embryogenesis abundant protein 49 from Arabidopsis thaliana (Mouse-ear cress).